Reading from the N-terminus, the 463-residue chain is Probable transport protein HsrA (463 aa).

14 helical membrane-spanning segments follow: residues 10-30 (GLAW…TILN), 49-69 (MAII…AWAA), 82-102 (VFTF…ESLI), 107-127 (IQGI…IQAV), 139-159 (MATA…WLVI), 165-185 (WIFL…GSVM), 197-217 (WTGF…LDLL), 225-245 (SVTY…CGYA), 267-287 (IIAN…LPLM), 298-318 (MSGW…ILIG), 328-348 (TTLI…AWLD), 354-374 (TWII…FTSI), 393-413 (VLSI…SIIL), and 429-449 (AFSY…WSLM).

The protein belongs to the major facilitator superfamily. EmrB family.

It localises to the cell inner membrane. This chain is Probable transport protein HsrA (hsrA), found in Haemophilus influenzae (strain ATCC 51907 / DSM 11121 / KW20 / Rd).